Reading from the N-terminus, the 479-residue chain is Cardiolipin synthase (479 aa).

2 consecutive transmembrane segments (helical) span residues 5-25 and 34-54; these read SLLLGLTFVLNIALAISIIFL and WAWVMVLLFIPILGFFLYLIF. PLD phosphodiesterase domains are found at residues 216–243 and 392–419; these read INYRNHRKLAIIDGYIGYLGGFNVGDEY and QNGFLHAKTIIVDGRIASVGTANIDVRS. Catalysis depends on residues His221, Lys223, Asp228, His397, Lys399, and Asp404.

It belongs to the phospholipase D family. Cardiolipin synthase subfamily.

It is found in the cell membrane. It carries out the reaction 2 a 1,2-diacyl-sn-glycero-3-phospho-(1'-sn-glycerol) = a cardiolipin + glycerol. Its function is as follows. Catalyzes the reversible phosphatidyl group transfer from one phosphatidylglycerol molecule to another to form cardiolipin (CL) (diphosphatidylglycerol) and glycerol. The sequence is that of Cardiolipin synthase (cls) from Oceanobacillus iheyensis (strain DSM 14371 / CIP 107618 / JCM 11309 / KCTC 3954 / HTE831).